A 372-amino-acid chain; its full sequence is MSFQVPTVGVEEEYQLVDPRSGALIPNCKEVMRTIRRNGGSEEAHSEIQHELHLNQIEMASDVCSSLEEVRDALTQTRRMLIDAARSNETELASAGTNPLPIPTDDALTPKDRYQAMTDRYQQIARDLFIFGCHVHVAMEDRELGIQVMNRCRRWLPILQAITANSPYWDGVDTGYASYRRELWAQWPMAGPPAHFDSLADYQSCVDDLVACGAIKDESFLYWDIRLPTRVPTIEFRAADVMTRVEETVGYVGMIRAIVMLAISEEEQGKPIVPIRPSVLSYAIWHAARYGMNEQLVDPESREMIPASELLNRLMTAIDPALKATGEARPVEAFANQLIKSGTGADRQRRGGELSSVVANVVAETVPSAILA.

It belongs to the glutamate--cysteine ligase type 2 family. YbdK subfamily.

The enzyme catalyses L-cysteine + L-glutamate + ATP = gamma-L-glutamyl-L-cysteine + ADP + phosphate + H(+). In terms of biological role, ATP-dependent carboxylate-amine ligase which exhibits weak glutamate--cysteine ligase activity. The chain is Putative glutamate--cysteine ligase 2 from Rhodopirellula baltica (strain DSM 10527 / NCIMB 13988 / SH1).